The chain runs to 456 residues: NADPH-ferredoxin reductase FprA (456 aa).

4 residues coordinate FAD: S17, E43, L51, and V87. Residues R113, N158 to V161, R202 to R203, and E214 each bind NADP(+). FAD contacts are provided by residues W362 and G369–I371. G369 contributes to the NADP(+) binding site.

The protein belongs to the ferredoxin--NADP reductase type 1 family. Monomer. It depends on FAD as a cofactor.

The enzyme catalyses 2 reduced [2Fe-2S]-[ferredoxin] + NADP(+) + H(+) = 2 oxidized [2Fe-2S]-[ferredoxin] + NADPH. Its function is as follows. May serve as electron transfer protein and supply electrons to P450 systems. In Mycobacterium leprae (strain TN), this protein is NADPH-ferredoxin reductase FprA (fprA).